A 315-amino-acid chain; its full sequence is tRNA uridine(34) hydroxylase (315 aa).

The Rhodanese domain maps to 122–223 (SDPDVLVIDT…YLEQIPQPES (102 aa)). Cysteine 183 serves as the catalytic Cysteine persulfide intermediate.

Belongs to the TrhO family.

The catalysed reaction is uridine(34) in tRNA + AH2 + O2 = 5-hydroxyuridine(34) in tRNA + A + H2O. In terms of biological role, catalyzes oxygen-dependent 5-hydroxyuridine (ho5U) modification at position 34 in tRNAs. This chain is tRNA uridine(34) hydroxylase, found in Caulobacter vibrioides (strain ATCC 19089 / CIP 103742 / CB 15) (Caulobacter crescentus).